Here is a 313-residue protein sequence, read N- to C-terminus: Biotin synthase (313 aa).

In terms of domain architecture, Radical SAM core spans 28–258 (NFGNDIELCS…LFPQARLRLS (231 aa)). [4Fe-4S] cluster is bound by residues Cys-46, Cys-50, and Cys-53. Residues Cys-90, Cys-121, Cys-181, and Arg-256 each coordinate [2Fe-2S] cluster.

Belongs to the radical SAM superfamily. Biotin synthase family. As to quaternary structure, homodimer. [4Fe-4S] cluster is required as a cofactor. It depends on [2Fe-2S] cluster as a cofactor.

It catalyses the reaction (4R,5S)-dethiobiotin + (sulfur carrier)-SH + 2 reduced [2Fe-2S]-[ferredoxin] + 2 S-adenosyl-L-methionine = (sulfur carrier)-H + biotin + 2 5'-deoxyadenosine + 2 L-methionine + 2 oxidized [2Fe-2S]-[ferredoxin]. Its pathway is cofactor biosynthesis; biotin biosynthesis; biotin from 7,8-diaminononanoate: step 2/2. Its function is as follows. Catalyzes the conversion of dethiobiotin (DTB) to biotin by the insertion of a sulfur atom into dethiobiotin via a radical-based mechanism. The sequence is that of Biotin synthase from Francisella tularensis subsp. holarctica (strain FTNF002-00 / FTA).